We begin with the raw amino-acid sequence, 1052 residues long: Error-prone DNA polymerase (1052 aa).

This sequence belongs to the DNA polymerase type-C family. DnaE2 subfamily.

The protein localises to the cytoplasm. It catalyses the reaction DNA(n) + a 2'-deoxyribonucleoside 5'-triphosphate = DNA(n+1) + diphosphate. Its function is as follows. DNA polymerase involved in damage-induced mutagenesis and translesion synthesis (TLS). It is not the major replicative DNA polymerase. The sequence is that of Error-prone DNA polymerase from Bordetella parapertussis (strain 12822 / ATCC BAA-587 / NCTC 13253).